A 362-amino-acid polypeptide reads, in one-letter code: Biotin synthase (362 aa).

The region spanning 46-273 is the Radical SAM core domain; the sequence is NEVQVSTLLS…ASHVRLSAGR (228 aa). [4Fe-4S] cluster-binding residues include Cys-61, Cys-65, and Cys-68. 4 residues coordinate [2Fe-2S] cluster: Cys-105, Cys-136, Cys-196, and Arg-268.

This sequence belongs to the radical SAM superfamily. Biotin synthase family. In terms of assembly, homodimer. The cofactor is [4Fe-4S] cluster. Requires [2Fe-2S] cluster as cofactor.

The catalysed reaction is (4R,5S)-dethiobiotin + (sulfur carrier)-SH + 2 reduced [2Fe-2S]-[ferredoxin] + 2 S-adenosyl-L-methionine = (sulfur carrier)-H + biotin + 2 5'-deoxyadenosine + 2 L-methionine + 2 oxidized [2Fe-2S]-[ferredoxin]. It functions in the pathway cofactor biosynthesis; biotin biosynthesis; biotin from 7,8-diaminononanoate: step 2/2. In terms of biological role, catalyzes the conversion of dethiobiotin (DTB) to biotin by the insertion of a sulfur atom into dethiobiotin via a radical-based mechanism. In Aeromonas salmonicida (strain A449), this protein is Biotin synthase.